The sequence spans 331 residues: 6-phosphogluconolactonase (331 aa).

Belongs to the cycloisomerase 2 family.

It carries out the reaction 6-phospho-D-glucono-1,5-lactone + H2O = 6-phospho-D-gluconate + H(+). The protein operates within carbohydrate degradation; pentose phosphate pathway; D-ribulose 5-phosphate from D-glucose 6-phosphate (oxidative stage): step 2/3. Catalyzes the hydrolysis of 6-phosphogluconolactone to 6-phosphogluconate. This chain is 6-phosphogluconolactonase, found in Enterobacter sp. (strain 638).